The primary structure comprises 147 residues: 3-dehydroquinate dehydratase (147 aa).

Tyr25 functions as the Proton acceptor in the catalytic mechanism. Substrate is bound by residues Asn76, His82, and Asp89. The active-site Proton donor is the His102. Substrate contacts are provided by residues 103–104 (IS) and Arg113.

Belongs to the type-II 3-dehydroquinase family. As to quaternary structure, homododecamer.

It carries out the reaction 3-dehydroquinate = 3-dehydroshikimate + H2O. The protein operates within metabolic intermediate biosynthesis; chorismate biosynthesis; chorismate from D-erythrose 4-phosphate and phosphoenolpyruvate: step 3/7. Functionally, catalyzes a trans-dehydration via an enolate intermediate. The chain is 3-dehydroquinate dehydratase from Mycobacterium tuberculosis (strain ATCC 25177 / H37Ra).